The following is a 201-amino-acid chain: MKNPIIDNIPCVLLAGGKSSRFTINNIQINKALMPLKSYSSLLEYQYTRLLKLFKQVIISAKKSYELNAPYLLEKESGLFSPLFGIHNAFLTLQTPYIFFIPIDAPLVSFESIKALCGIENFSVVYAKSPTKEHYLISLWHKSTLNALNYTLKTQNYRLSDLVKNTSSVAIHFNQEEEFLNLNTLKDYELAVQILKKRANG.

GTP contacts are provided by residues L14–G16, K31, and D104. D104 provides a ligand contact to Mg(2+).

This sequence belongs to the MobA family. As to quaternary structure, monomer. Mg(2+) is required as a cofactor.

The protein resides in the cytoplasm. The catalysed reaction is Mo-molybdopterin + GTP + H(+) = Mo-molybdopterin guanine dinucleotide + diphosphate. Functionally, transfers a GMP moiety from GTP to Mo-molybdopterin (Mo-MPT) cofactor (Moco or molybdenum cofactor) to form Mo-molybdopterin guanine dinucleotide (Mo-MGD) cofactor. This chain is Molybdenum cofactor guanylyltransferase, found in Helicobacter pylori (strain P12).